The chain runs to 581 residues: Proline--tRNA ligase (581 aa).

The protein belongs to the class-II aminoacyl-tRNA synthetase family. ProS type 1 subfamily. As to quaternary structure, homodimer.

The protein resides in the cytoplasm. It catalyses the reaction tRNA(Pro) + L-proline + ATP = L-prolyl-tRNA(Pro) + AMP + diphosphate. Catalyzes the attachment of proline to tRNA(Pro) in a two-step reaction: proline is first activated by ATP to form Pro-AMP and then transferred to the acceptor end of tRNA(Pro). As ProRS can inadvertently accommodate and process non-cognate amino acids such as alanine and cysteine, to avoid such errors it has two additional distinct editing activities against alanine. One activity is designated as 'pretransfer' editing and involves the tRNA(Pro)-independent hydrolysis of activated Ala-AMP. The other activity is designated 'posttransfer' editing and involves deacylation of mischarged Ala-tRNA(Pro). The misacylated Cys-tRNA(Pro) is not edited by ProRS. In Methylibium petroleiphilum (strain ATCC BAA-1232 / LMG 22953 / PM1), this protein is Proline--tRNA ligase.